A 227-amino-acid chain; its full sequence is Urease subunit gamma/beta (227 aa).

Positions 1 to 101 (MRLTPTERDR…LAVVTDPIGG (101 aa)) are urease gamma. The urease beta stretch occupies residues 102–227 (GLGDQAPGAL…ACGYLGVEQR (126 aa)).

The protein in the N-terminal section; belongs to the urease gamma subunit family. In the C-terminal section; belongs to the urease beta subunit family. As to quaternary structure, heterohexamer of 3 UreC (alpha) and 3 UreAB (gamma/beta) subunits.

It is found in the cytoplasm. The enzyme catalyses urea + 2 H2O + H(+) = hydrogencarbonate + 2 NH4(+). It functions in the pathway nitrogen metabolism; urea degradation; CO(2) and NH(3) from urea (urease route): step 1/1. This is Urease subunit gamma/beta from Streptomyces avermitilis (strain ATCC 31267 / DSM 46492 / JCM 5070 / NBRC 14893 / NCIMB 12804 / NRRL 8165 / MA-4680).